The primary structure comprises 229 residues: Uracil-DNA glycosylase (229 aa).

The Proton acceptor role is filled by Asp64.

This sequence belongs to the uracil-DNA glycosylase (UDG) superfamily. UNG family.

Its subcellular location is the cytoplasm. It carries out the reaction Hydrolyzes single-stranded DNA or mismatched double-stranded DNA and polynucleotides, releasing free uracil.. Its function is as follows. Excises uracil residues from the DNA which can arise as a result of misincorporation of dUMP residues by DNA polymerase or due to deamination of cytosine. The chain is Uracil-DNA glycosylase from Shigella flexneri serotype 5b (strain 8401).